A 138-amino-acid chain; its full sequence is Basic phospholipase A2 Cll-N6 (138 aa).

Residues 1–16 (MRTFWIVAVLLVGVEG) form the signal peptide. Disulfide bonds link Cys-42-Cys-131, Cys-44-Cys-60, Cys-59-Cys-111, Cys-65-Cys-138, Cys-66-Cys-104, Cys-73-Cys-97, and Cys-91-Cys-102. The Ca(2+) site is built by Tyr-43, Gly-45, and Gly-47. The active site involves His-63. Residue Asp-64 coordinates Ca(2+). The active site involves Asp-105.

Monomer. Ca(2+) is required as a cofactor. As to expression, expressed by the venom gland.

The protein localises to the secreted. The catalysed reaction is a 1,2-diacyl-sn-glycero-3-phosphocholine + H2O = a 1-acyl-sn-glycero-3-phosphocholine + a fatty acid + H(+). Its function is as follows. Snake venom phospholipase A2 (PLA2) that shows myotoxic activities. PLA2 catalyzes the calcium-dependent hydrolysis of the 2-acyl groups in 3-sn-phosphoglycerides. This chain is Basic phospholipase A2 Cll-N6, found in Crotalus lepidus lepidus (Mottled rock rattlesnake).